The primary structure comprises 549 residues: Cytoplasmic trehalase (549 aa).

Substrate-binding positions include Arg168, 175–176 (WD), Asn212, 221–223 (RSQ), 292–294 (RDE), and Gly324. Active-site proton donor/acceptor residues include Asp326 and Glu509. Position 525 (Glu525) interacts with substrate.

The protein belongs to the glycosyl hydrolase 37 family. As to quaternary structure, monomer.

The protein localises to the cytoplasm. It carries out the reaction alpha,alpha-trehalose + H2O = alpha-D-glucose + beta-D-glucose. It functions in the pathway glycan degradation; trehalose degradation; D-glucose from alpha,alpha-trehalose: step 1/1. In terms of biological role, hydrolyzes trehalose to glucose. Could be involved, in cells returning to low osmolarity conditions, in the utilization of the accumulated cytoplasmic trehalose, which was synthesized in response to high osmolarity. The polypeptide is Cytoplasmic trehalase (Salmonella arizonae (strain ATCC BAA-731 / CDC346-86 / RSK2980)).